The following is a 347-amino-acid chain: Gamma-glutamyl hydrolase 2 (347 aa).

The signal sequence occupies residues 1 to 22; the sequence is MWSYVWLPLVALSLFKDSIIMA. Residues 45-341 form the Gamma-glutamyl hydrolase domain; the sequence is APDPNLNYRP…IGYDEVYIFT (297 aa). The active-site Nucleophile is the C155. The Proton donor role is filled by H268.

This sequence belongs to the peptidase C26 family. As to expression, expressed in roots, in leaves, stems and siliques.

It localises to the vacuole. The protein localises to the secreted. It is found in the extracellular space. Its subcellular location is the cell wall. The enzyme catalyses (6S)-5,6,7,8-tetrahydrofolyl-(gamma-L-Glu)(n) + (n-1) H2O = (6S)-5,6,7,8-tetrahydrofolate + (n-1) L-glutamate. Its function is as follows. Cleaves the polyglutamate sidechains of folate polyglutamates in the vacuole. Is important for polyglutamyl tail length determination before vacuolar exit. Plays a role on folate stability and intracellular folate content. Has endopeptidase activity against 4-amino-10-methylpteroyl penta-, tetra-, tri- and di-gamma-L-glutamate substrates and is responsible for the production of folic acid, also called pteroylglutamic acid (PteGlu) from teroylpolyglutamates. In Arabidopsis thaliana (Mouse-ear cress), this protein is Gamma-glutamyl hydrolase 2 (GGH2).